An 88-amino-acid chain; its full sequence is MLVTDKKQEIITSFKRHDSDTGSPEVQIAILTERIIYLTEHFKVHKKDHHSRRGLLKIVGQRRRLLDYLKKKDVERYRAIIEKLGIRR.

This sequence belongs to the universal ribosomal protein uS15 family. In terms of assembly, part of the 30S ribosomal subunit. Forms a bridge to the 50S subunit in the 70S ribosome, contacting the 23S rRNA.

One of the primary rRNA binding proteins, it binds directly to 16S rRNA where it helps nucleate assembly of the platform of the 30S subunit by binding and bridging several RNA helices of the 16S rRNA. Functionally, forms an intersubunit bridge (bridge B4) with the 23S rRNA of the 50S subunit in the ribosome. The sequence is that of Small ribosomal subunit protein uS15 from Geobacter metallireducens (strain ATCC 53774 / DSM 7210 / GS-15).